Here is a 140-residue protein sequence, read N- to C-terminus: Histone H2B (140 aa).

Over residues 1–10 (MPPKAAEKKP) the composition is skewed to basic and acidic residues. The tract at residues 1-48 (MPPKAAEKKPTTGGKAPAGKAPAEKKEAGKKTAAAASGDKKKRGKTRK) is disordered. An N6-acetyllysine; alternate mark is found at Lys-8 and Lys-9. Glycyl lysine isopeptide (Lys-Gly) (interchain with G-Cter in SUMO); alternate cross-links involve residues Lys-8 and Lys-9. The span at 11 to 21 (TTGGKAPAGKA) shows a compositional bias: low complexity. The residue at position 15 (Lys-15) is an N6-acetyllysine. Lys-25 is subject to N6-acetyllysine; alternate. Residue Lys-25 forms a Glycyl lysine isopeptide (Lys-Gly) (interchain with G-Cter in SUMO); alternate linkage. Lys-26 is covalently cross-linked (Glycyl lysine isopeptide (Lys-Gly) (interchain with G-Cter in SUMO)). Lys-134 participates in a covalent cross-link: Glycyl lysine isopeptide (Lys-Gly) (interchain with G-Cter in ubiquitin).

This sequence belongs to the histone H2B family. In terms of assembly, the nucleosome is a histone octamer containing two molecules each of H2A, H2B, H3 and H4 assembled in one H3-H4 heterotetramer and two H2A-H2B heterodimers. The octamer wraps approximately 147 bp of DNA. Monoubiquitinated by the ubc2-bre1 complex to form H2BK123ub1. H2BK123ub1 gives a specific tag for epigenetic transcriptional activation and is also prerequisite for H3K4me and H3K79me formation. H2BK123ub1 also modulates the formation of double-strand breaks during meiosis and is a prerequisite for DNA-damage checkpoint activation. Post-translationally, acetylated by gcn5 to form H2BK11ac and H2BK16ac. H2BK16ac can also be formed by esa1. Acetylation of N-terminal lysines and particularly formation of H2BK11acK16ac has a positive effect on transcription. In terms of processing, sumoylation to form H2BK6su or H2BK7su, and probably also H2BK16su or H2BK17su, occurs preferentially near the telomeres and represses gene transcription.

The protein localises to the nucleus. The protein resides in the chromosome. Functionally, core component of nucleosome. Nucleosomes wrap and compact DNA into chromatin, limiting DNA accessibility to the cellular machineries which require DNA as a template. Histones thereby play a central role in transcription regulation, DNA repair, DNA replication and chromosomal stability. DNA accessibility is regulated via a complex set of post-translational modifications of histones, also called histone code, and nucleosome remodeling. The sequence is that of Histone H2B (htb1) from Aspergillus terreus (strain NIH 2624 / FGSC A1156).